The chain runs to 409 residues: Elongation factor Tu (409 aa).

One can recognise a tr-type G domain in the interval K10–E214. The segment at G19 to T26 is G1. G19–T26 is a GTP binding site. Residue T26 coordinates Mg(2+). The tract at residues G60 to N64 is G2. Residues D81 to G84 form a G3 region. Residues D81 to H85 and N136 to D139 contribute to the GTP site. Positions N136–D139 are G4. The tract at residues S174 to L176 is G5.

It belongs to the TRAFAC class translation factor GTPase superfamily. Classic translation factor GTPase family. EF-Tu/EF-1A subfamily. In terms of assembly, monomer.

Its subcellular location is the cytoplasm. It catalyses the reaction GTP + H2O = GDP + phosphate + H(+). GTP hydrolase that promotes the GTP-dependent binding of aminoacyl-tRNA to the A-site of ribosomes during protein biosynthesis. This chain is Elongation factor Tu, found in Acaryochloris marina (strain MBIC 11017).